The sequence spans 670 residues: Major fimbrium tip subunit FimD (670 aa).

Residues 1–24 form the signal peptide; it reads MRTNRILNIICPPILFLLVGFLFG. Cysteine 25 carries the N-palmitoyl cysteine lipid modification. The S-diacylglycerol cysteine moiety is linked to residue cysteine 25. A propeptide spanning residues 25 to 50 is cleaved from the precursor; it reads CVREDIESDMNETSSLFLQVQPYNQR.

It belongs to the FimD family. As to quaternary structure, fimbriae are composed of a major, structural subunit and the minor components FimC, FimD and FimE. Identified in a complex composed of FimC, FimD and FimE (in vitro). The complex interacts with host extracellular matrix proteins, including fibronectin and type I collagen. Interacts with host CXCR4.

Its subcellular location is the fimbrium. It localises to the cell outer membrane. Its function is as follows. Probably a component of the fimbrium tip. These long, filamentous pili are attached to the cell surface; they mediate biofilm formation, adhesion onto host cells and onto other bacteria that are part of the oral microbiome. They play an important role in invasion of periodontal tissues and are major virulence factors. FimC, FimD and FimE contribute to interaction with host CXCR4 and thereby down-regulate the TLR2-mediated host immune response. The polypeptide is Major fimbrium tip subunit FimD (Porphyromonas gingivalis (strain ATCC 33277 / DSM 20709 / CIP 103683 / JCM 12257 / NCTC 11834 / 2561)).